A 171-amino-acid chain; its full sequence is Ribosome maturation factor RimM (171 aa).

Positions 97–170 (KLNYFSWDHY…IIYMKLPVGL (74 aa)) constitute a PRC barrel domain.

It belongs to the RimM family. In terms of assembly, binds ribosomal protein uS19.

The protein localises to the cytoplasm. In terms of biological role, an accessory protein needed during the final step in the assembly of 30S ribosomal subunit, possibly for assembly of the head region. Essential for efficient processing of 16S rRNA. May be needed both before and after RbfA during the maturation of 16S rRNA. It has affinity for free ribosomal 30S subunits but not for 70S ribosomes. This chain is Ribosome maturation factor RimM, found in Azobacteroides pseudotrichonymphae genomovar. CFP2.